The sequence spans 502 residues: Neuronal acetylcholine receptor subunit alpha-7 (502 aa).

Residues 1–23 form the signal peptide; it reads MGLRALMLWLLAAAGLVRESLQG. Over 24–233 the chain is Extracellular; sequence EFQRKLYKEL…VTMRRRTLYY (210 aa). Residues Arg-42 and Val-44 each coordinate Ca(2+). Asn-46, Asn-90, and Asn-133 each carry an N-linked (GlcNAc...) asparagine glycan. A disulfide bridge connects residues Cys-150 and Cys-164. Ca(2+) is bound by residues Thr-172 and Tyr-210. Cys-212 and Cys-213 form a disulfide bridge. The next 3 helical transmembrane spans lie at 234–254, 262–282, and 295–315; these read GLNLLIPCVLISALALLVFLL, ISLGITVLLSLTVFMLLVAEI, and QYFASTMIIVGLSVVVTVIVL. Topologically, residues 316 to 469 are cytoplasmic; that stretch reads QYHHHDPDGG…WKFAASVVDR (154 aa). The chain crosses the membrane as a helical span at residues 470 to 490; it reads LCLMAFSVFTIICTIGILMSA.

It belongs to the ligand-gated ion channel (TC 1.A.9) family. Acetylcholine receptor (TC 1.A.9.1) subfamily. Alpha-7/CHRNA7 sub-subfamily. In terms of assembly, homopentamer. Can also form heteropentamers with CHRNB2, mainly found in basal forebrain cholinergic neurons.

It is found in the postsynaptic cell membrane. It localises to the cell membrane. The catalysed reaction is Ca(2+)(in) = Ca(2+)(out). The enzyme catalyses K(+)(in) = K(+)(out). It carries out the reaction Na(+)(in) = Na(+)(out). It catalyses the reaction choline(out) = choline(in). The catalysed reaction is NH4(+)(in) = NH4(+)(out). The enzyme catalyses L-arginine(in) = L-arginine(out). It carries out the reaction guanidine(out) = guanidine(in). Activated by a myriad of ligands such as acetylcholine, cytisine, nicotine, choline and epibatidine. Activity is modulated by positive allosteric modulators (PAMs), such as flavonoids, with a wide range of chemical diversity, pharmacological sensitivity and efficacy. AChR activity is inhibited by the antagonists alpha-conotoxons RgIA, ImI and ImII, small disulfide-constrained peptides from cone snails. Its function is as follows. Component of neuronal acetylcholine receptors (nAChRs) that function as pentameric, ligand-gated cation channels with high calcium permeability among other activities. nAChRs are excitatory neurotrasnmitter receptors formed by a collection of nAChR subunits known to mediate synaptic transmission in the nervous system and the neuromuscular junction. Each nAchR subunit confers differential attributes to channel properties, including activation, deactivation and desensitization kinetics, pH sensitivity, cation permeability, and binding to allosteric modulators. CHRNA7 is an homooligomeric neuronal acetylcholine receptor abundantly expressed in the central nervous system. Characterized by a fast desensitization and high calcium permeability. Also expressed in non-neuronal cells such as immune cells like lymphocytes, monocytes and macrophages. The polypeptide is Neuronal acetylcholine receptor subunit alpha-7 (CHRNA7) (Gallus gallus (Chicken)).